We begin with the raw amino-acid sequence, 364 residues long: MFVAKSIAADHKDLIHDVSYDFHGRRMATCSSDQSVKVWDKGDDGEWHCTASWKTHSGSVWRVTWAHPEFGQVLASCSFDRTAAVWEEIVGESNDKQRGQSHWIKRTTLVDSRTSVTDVKFAPKHMGLMLTTCSADGVVRIYEAPDVMNLSQWSLQHEISCKLACSCISWNPSSSRAHPPMIAVGGDDSNGAYSGKVQIHEYNENTRKYAKAETLMTVTDPVHDIAFAPNLGRSFHVLAIATKDVRIFKLLPLRRESANSSGPTKFEVQVMAQFDSHNSQVWRVSWNITSTLLASSGDDGCVRLWKANYMDNWKCTGILRGDGSPVNGSSGPSAALSAVGVPGAAQMIVGAATAGRKKAQLMPG.

WD repeat units follow at residues 10-49, 55-96, 111-152, 160-210, 217-258, and 276-315; these read DHKD…EWHC, THSG…SNDK, DSRT…NLSQ, SCKL…RKYA, TVTD…RESA, and SHNS…NWKC.

This sequence belongs to the WD repeat SEC13 family. As to quaternary structure, component of the Nup107-160 subcomplex of the nuclear pore complex (NPC). The Nup107-160 subcomplex includes NUP160, NUP133, NUP107, NUP98, NUP85, NUP43, NUP37, SEH1 and SEC13. Component of the GATOR2 subcomplex, composed of MIOS, SEC13, SEH1L, WDR24 and WDR59. The GATOR2 complex interacts with CASTOR1 and CASTOR2; the interaction is negatively regulated by arginine. The GATOR2 complex interacts with SESN1, SESN2 and SESN3; the interaction is negatively regulated by amino acids.

The protein resides in the chromosome. It is found in the centromere. It localises to the kinetochore. The protein localises to the nucleus. Its subcellular location is the nuclear pore complex. The protein resides in the lysosome membrane. The GATOR2 complex is negatively regulated by the upstream amino acid sensors CASTOR1 and SESN2, which sequester the GATOR2 complex in absence of amino acids. In the presence of abundant amino acids, GATOR2 is released from CASTOR1 and SESN2 and activated. Functionally, component of the Nup107-160 subcomplex of the nuclear pore complex (NPC). The Nup107-160 subcomplex is required for the assembly of a functional NPC. The Nup107-160 subcomplex is also required for normal kinetochore microtubule attachment, mitotic progression and chromosome segregation. This subunit plays a role in recruitment of the Nup107-160 subcomplex to the kinetochore. Its function is as follows. As a component of the GATOR2 complex, functions as an activator of the amino acid-sensing branch of the mTORC1 signaling pathway. The GATOR2 complex indirectly activates mTORC1 through the inhibition of the GATOR1 subcomplex. GATOR2 probably acts as an E3 ubiquitin-protein ligase toward GATOR1. In the presence of abundant amino acids, the GATOR2 complex mediates ubiquitination of the NPRL2 core component of the GATOR1 complex, leading to GATOR1 inactivation. In the absence of amino acids, GATOR2 is inhibited, activating the GATOR1 complex. The chain is Nucleoporin SEH1 (seh1l) from Danio rerio (Zebrafish).